A 172-amino-acid chain; its full sequence is C-phycocyanin beta chain (172 aa).

Residues Asn35, Asp39, Asn72, Arg77, Cys82, 82–88, 149–151, and Cys153 each bind (2R,3E)-phycocyanobilin; these read CLRDMEI and TIG. Asn72 is subject to N4-methylasparagine.

This sequence belongs to the phycobiliprotein family. Heterodimer of an alpha and a beta subunit, which further assembles into trimers and the trimers into hexamers. The basic functional unit of phycobiliproteins is a ring-shaped hexamer formed from two back-to-back trimers contacting via the alpha chain subunits. The trimers are composed of alpha/beta subunit heterodimers arranged around a three-fold axis of symmetry. The phycoerythrins also contain a gamma subunit which is located in the center of the hexamer. In terms of processing, contains two covalently linked phycocyanobilin chromophores.

Its subcellular location is the plastid. It is found in the chloroplast thylakoid membrane. In terms of biological role, light-harvesting photosynthetic tetrapyrrole chromophore-protein from the phycobiliprotein complex (phycobilisome, PBS). Phycocyanin is the major phycobiliprotein in the PBS rod. The sequence is that of C-phycocyanin beta chain (cpcB) from Cyanidium caldarium (Red alga).